Reading from the N-terminus, the 152-residue chain is Superoxide dismutase [Cu-Zn] (152 aa).

Residues H45, H47, and H62 each coordinate Cu cation. C56 and C145 are joined by a disulfide. 4 residues coordinate Zn(2+): H62, H70, H79, and D82. A Cu cation-binding site is contributed by H119.

Belongs to the Cu-Zn superoxide dismutase family. In terms of assembly, homodimer. Requires Cu cation as cofactor. It depends on Zn(2+) as a cofactor.

It is found in the cytoplasm. It catalyses the reaction 2 superoxide + 2 H(+) = H2O2 + O2. In terms of biological role, destroys radicals which are normally produced within the cells and which are toxic to biological systems. In Paulownia kawakamii (Dragon tree), this protein is Superoxide dismutase [Cu-Zn] (SODCC).